Reading from the N-terminus, the 89-residue chain is Small ribosomal subunit protein uS15 (89 aa).

Belongs to the universal ribosomal protein uS15 family. In terms of assembly, part of the 30S ribosomal subunit. Forms a bridge to the 50S subunit in the 70S ribosome, contacting the 23S rRNA.

Functionally, one of the primary rRNA binding proteins, it binds directly to 16S rRNA where it helps nucleate assembly of the platform of the 30S subunit by binding and bridging several RNA helices of the 16S rRNA. Forms an intersubunit bridge (bridge B4) with the 23S rRNA of the 50S subunit in the ribosome. The chain is Small ribosomal subunit protein uS15 from Jannaschia sp. (strain CCS1).